The chain runs to 1364 residues: MADRPLTQQRLRKSFGKIAKIVDIPNLIEMQRISYQRFLQMDVPPEKRETIGLQAVFHSVFPIRDFSGTASLEFVSYRFGEIKYSVEDCVHRGMTYEVPIRITVRLVVFDVDKEKGIQNIRDIKEQEIYFGTIPLMTEQGTFVINGTERVVVSQLHRSSGVFFDHDKGKSHASGKVIYTARIIPVRGSWIDMEIDPKDVLYIRIDRRRKFPATLLFKAFGYSTEDLLNYFYQTEKLTLTPKTLFKEFDAKTLRGQRASITVKMPDSDEVIVKKGRLFTQRAVKTMAQAGIEKVAILQEDLEDKVLARRVLDPKTGEVLYPANHEIDEATLEAMRDAGVQKFEILYSAPGTGGDSVRKALLLDKVESREEALVEIYRRLRPSNPSTVEVAKDFIDQLFFRPSHYDLSAVGRMKLNMRLGLDTPVEVKTLRREDILLTAKTLVDLKDSQGAVDDIDHLGNRRVRAVGELLENQYRIGLVRMERAIKERMSLQEIDALMPNDLINPKPVSAVVKEFFGTSQLSQFMDQTNPLSEVTHKRRLSALGPGGLTRERAGFEVRDVHPSHYGRICPIETPEGPNIGLIVSLSTYARVNEFGFVETPYRVVTEGQATKEIKYLSAMEEKDLPIAQANAPLDEEGFFINPTVSSRVEGELTIVKKEDVKLMDISPNQLVSVSSSMIPFLENDDANRALMGSNMQRQAVPLLATEAPLIGTGLERVVARDSGVTLVAKRDGKVVAVDASRIVLQHEDERKDRMDKQVTIYNLSKFTRSNQNTCFNQRPIVKLGQEVKAGDIIADGPATENGELALGRNVTVAFLPWGGYNFEDSILVSERLVRDGVFTSVHIEEFEVVSRDTKLGKEEITRDIPNVGEEALKNLDDSGIVRLGAEVRPGDILVGKITPKGETQLSPEEKLLRAIFGEKAGDVKDTSLRVPPGVEGVVVDAKVFARRGVEKDDRTRLIEDEEIAALEKDRDDELKIMEDTVRSKLITIVLGQEATAPVKKGKAVLIPKGQPITAEMLEDCPLAPLEALVLKDEDHSERVHELLEIYREQRESVQMSFEEQVNRYQKGDDLPPGVIKMVKIYVAMKRRLSVGDKMAGRHGNKGVVSCILPQEDLPYFENGTPVDMVLNPLGVPSRMNVGQILEIHLGRAAKSLGDQIEALLEEQKLDGLRQKMQEIFSSDADEVAGLTEQELLEVAGQYKRGVHMATPVFDGAKEDEITDLLSSAGVSPSGQAVLYDGRTGERFKGEITVGTMYMLKLHHLVDDKIHARSIGPYSLVTQQPLGGKAQFGGQRLGEMEVWAMEAYGAAYALQEFLTVKSDDMVGRTRMYEKIVKGQNVLEPGMPESFNVLVKELQSLGLEMSLIEEAK.

It belongs to the RNA polymerase beta chain family. In terms of assembly, the RNAP catalytic core consists of 2 alpha, 1 beta, 1 beta' and 1 omega subunit. When a sigma factor is associated with the core the holoenzyme is formed, which can initiate transcription.

The catalysed reaction is RNA(n) + a ribonucleoside 5'-triphosphate = RNA(n+1) + diphosphate. Its function is as follows. DNA-dependent RNA polymerase catalyzes the transcription of DNA into RNA using the four ribonucleoside triphosphates as substrates. This is DNA-directed RNA polymerase subunit beta from Desulfatibacillum aliphaticivorans.